A 349-amino-acid chain; its full sequence is DNA replication and repair protein RecF (349 aa).

30-37 (GKNGSGKT) contacts ATP.

This sequence belongs to the RecF family.

The protein localises to the cytoplasm. The RecF protein is involved in DNA metabolism; it is required for DNA replication and normal SOS inducibility. RecF binds preferentially to single-stranded, linear DNA. It also seems to bind ATP. The chain is DNA replication and repair protein RecF from Francisella tularensis subsp. mediasiatica (strain FSC147).